A 229-amino-acid chain; its full sequence is 7-cyano-7-deazaguanine synthase (229 aa).

8–18 (FSGGQDSTTCL) is an ATP binding site. Zn(2+) contacts are provided by Cys-186, Cys-195, Cys-198, and Cys-201.

The protein belongs to the QueC family. Requires Zn(2+) as cofactor.

It catalyses the reaction 7-carboxy-7-deazaguanine + NH4(+) + ATP = 7-cyano-7-deazaguanine + ADP + phosphate + H2O + H(+). It participates in purine metabolism; 7-cyano-7-deazaguanine biosynthesis. Catalyzes the ATP-dependent conversion of 7-carboxy-7-deazaguanine (CDG) to 7-cyano-7-deazaguanine (preQ(0)). The sequence is that of 7-cyano-7-deazaguanine synthase from Edwardsiella ictaluri (strain 93-146).